The sequence spans 108 residues: Flagellar hook-basal body complex protein FliE (108 aa).

Belongs to the FliE family.

Its subcellular location is the bacterial flagellum basal body. The polypeptide is Flagellar hook-basal body complex protein FliE (Pseudomonas fluorescens (strain ATCC BAA-477 / NRRL B-23932 / Pf-5)).